Reading from the N-terminus, the 468-residue chain is Probable Xaa-Pro aminopeptidase PEPP (468 aa).

Mn(2+)-binding residues include Asp264, Asp275, Glu398, and Glu438.

The protein belongs to the peptidase M24B family. It depends on Mn(2+) as a cofactor.

The catalysed reaction is Release of any N-terminal amino acid, including proline, that is linked to proline, even from a dipeptide or tripeptide.. Functionally, catalyzes the removal of a penultimate prolyl residue from the N-termini of peptides. This is Probable Xaa-Pro aminopeptidase PEPP (PEPP) from Paracoccidioides brasiliensis (strain Pb03).